The sequence spans 344 residues: Uroporphyrinogen decarboxylase (344 aa).

Substrate is bound by residues 26-30 (RQAGR), Phe-45, Asp-75, Tyr-151, Ser-206, and His-320.

The protein belongs to the uroporphyrinogen decarboxylase family. As to quaternary structure, homodimer.

It localises to the cytoplasm. The catalysed reaction is uroporphyrinogen III + 4 H(+) = coproporphyrinogen III + 4 CO2. Its pathway is porphyrin-containing compound metabolism; protoporphyrin-IX biosynthesis; coproporphyrinogen-III from 5-aminolevulinate: step 4/4. Catalyzes the decarboxylation of four acetate groups of uroporphyrinogen-III to yield coproporphyrinogen-III. This is Uroporphyrinogen decarboxylase from Staphylococcus saprophyticus subsp. saprophyticus (strain ATCC 15305 / DSM 20229 / NCIMB 8711 / NCTC 7292 / S-41).